The primary structure comprises 35 residues: MQVNELGFLASLLFVLVPSVFLIVLYIQTASREAK.

The helical transmembrane segment at 7–27 (GFLASLLFVLVPSVFLIVLYI) threads the bilayer.

Belongs to the PsbM family. In terms of assembly, PSII is composed of 1 copy each of membrane proteins PsbA, PsbB, PsbC, PsbD, PsbE, PsbF, PsbH, PsbI, PsbJ, PsbK, PsbL, PsbM, PsbT, PsbX, PsbY, PsbZ, Psb30/Ycf12, peripheral proteins PsbO, CyanoQ (PsbQ), PsbU, PsbV and a large number of cofactors. It forms dimeric complexes.

It is found in the cellular thylakoid membrane. Functionally, one of the components of the core complex of photosystem II (PSII). PSII is a light-driven water:plastoquinone oxidoreductase that uses light energy to abstract electrons from H(2)O, generating O(2) and a proton gradient subsequently used for ATP formation. It consists of a core antenna complex that captures photons, and an electron transfer chain that converts photonic excitation into a charge separation. This subunit is found at the monomer-monomer interface. The sequence is that of Photosystem II reaction center protein M from Synechococcus elongatus (strain ATCC 33912 / PCC 7942 / FACHB-805) (Anacystis nidulans R2).